A 280-amino-acid chain; its full sequence is Dual adapter for phosphotyrosine and 3-phosphotyrosine and 3-phosphoinositide (280 aa).

The segment at 1–20 (MGRAELLEGKMSTQDPSDLW) is disordered. The region spanning 35–129 (WYHGNLTRHA…GTLMVLKHPY (95 aa)) is the SH2 domain. At Y139 the chain carries Phosphotyrosine. S141 bears the Phosphoserine mark. In terms of domain architecture, PH spans 164–259 (LGTKEGYLTK…WIKILRWKLS (96 aa)).

Interacts with PtdIns(3,4,5)P3 and PLCG2. In vitro, interacts with PtdIns(3,4)P2. Phosphorylated on tyrosine residues. In terms of tissue distribution, highly expressed in placenta and lung, followed by brain, heart, kidney, liver, pancreas and skeletal muscle. Expressed by B-lymphocytes, but not T-lymphocytes or nonhematopoietic cells.

It localises to the cytoplasm. The protein resides in the membrane. Its function is as follows. May act as a B-cell-associated adapter that regulates B-cell antigen receptor (BCR)-signaling downstream of PI3K. This is Dual adapter for phosphotyrosine and 3-phosphotyrosine and 3-phosphoinositide (DAPP1) from Homo sapiens (Human).